The following is a 506-amino-acid chain: NAD(P)H-quinone oxidoreductase chain 4, chloroplastic (506 aa).

The next 14 helical transmembrane spans lie at 5-25, 35-55, 88-108, 114-134, 135-155, 168-188, 209-229, 243-263, 275-295, 309-329, 331-351, 386-406, 415-435, and 463-483; these read FPLL…IPFL, WYTL…FIYK, MPLI…AWPI, LFYF…LSQD, ILLF…LLSL, FILY…TMAF, ALEI…LPAF, HYST…YGLI, VIFS…GALT, SSIS…DLGL, GAMM…FLAG, SLAL…LGFL, FIAL…IYLL, and IFIM…PNLT.

It belongs to the complex I subunit 4 family.

The protein resides in the plastid. It is found in the chloroplast thylakoid membrane. It catalyses the reaction a plastoquinone + NADH + (n+1) H(+)(in) = a plastoquinol + NAD(+) + n H(+)(out). It carries out the reaction a plastoquinone + NADPH + (n+1) H(+)(in) = a plastoquinol + NADP(+) + n H(+)(out). The chain is NAD(P)H-quinone oxidoreductase chain 4, chloroplastic from Chaetosphaeridium globosum (Charophycean green alga).